We begin with the raw amino-acid sequence, 309 residues long: Homoserine kinase (309 aa).

Position 85–95 (85–95) interacts with ATP; the sequence is PYGLGLGSSGS.

It belongs to the GHMP kinase family. Homoserine kinase subfamily.

Its subcellular location is the cytoplasm. The enzyme catalyses L-homoserine + ATP = O-phospho-L-homoserine + ADP + H(+). It functions in the pathway amino-acid biosynthesis; L-threonine biosynthesis; L-threonine from L-aspartate: step 4/5. In terms of biological role, catalyzes the ATP-dependent phosphorylation of L-homoserine to L-homoserine phosphate. In Thermoplasma volcanium (strain ATCC 51530 / DSM 4299 / JCM 9571 / NBRC 15438 / GSS1), this protein is Homoserine kinase.